Here is a 333-residue protein sequence, read N- to C-terminus: uncharacterized protein (333 aa).

This sequence to E.coli YfeH.

This is an uncharacterized protein from Pseudomonas aeruginosa (strain ATCC 15692 / DSM 22644 / CIP 104116 / JCM 14847 / LMG 12228 / 1C / PRS 101 / PAO1).